An 85-amino-acid chain; its full sequence is Acyl carrier protein (85 aa).

The Carrier domain maps to 4–79; that stretch reads DELFEKVKEI…NAVNLLSEKL (76 aa). Serine 39 bears the O-(pantetheine 4'-phosphoryl)serine mark.

It belongs to the acyl carrier protein (ACP) family. Post-translationally, 4'-phosphopantetheine is transferred from CoA to a specific serine of apo-ACP by AcpS. This modification is essential for activity because fatty acids are bound in thioester linkage to the sulfhydryl of the prosthetic group.

It localises to the cytoplasm. The protein operates within lipid metabolism; fatty acid biosynthesis. In terms of biological role, carrier of the growing fatty acid chain in fatty acid biosynthesis. The protein is Acyl carrier protein of Petrotoga mobilis (strain DSM 10674 / SJ95).